A 319-amino-acid polypeptide reads, in one-letter code: MFKFDKEQMVIEIAGRKFGGQPGEYPTGLSGTIFYARHKIVEDEIKGIFDKSAAEALINKQAEMEDTTGNPALVQVFGGNPEALTKYIDFVAEVWDGPMLLDSTSGEARMAAATRATEAGYANQCIYNSINVSIDEAEFQNLVESDIEASIVLCFDPMDPSVEGKLNVLLDGGKTTDTGMLDLAEKAGIKYPLIDVACTPLGSGAGQSVRASFAVKAKLGLPVGSGIHNIPSAWDWLRDFRKGLREAGQTQLAKDVHHVCDIGANIVQTMGSGDFVLYGPIDNAELAFPAVAMTDMVIAETAKDMGTVPVDTHPINKLL.

The protein belongs to the MtrH family. In terms of assembly, the complex is composed of 8 subunits; MtrA, MtrB, MtrC, MtrD, MtrE, MtrF, MtrG and MtrH.

It carries out the reaction 5-methyl-5,6,7,8-tetrahydromethanopterin + coenzyme M + 2 Na(+)(in) = 5,6,7,8-tetrahydromethanopterin + methyl-coenzyme M + 2 Na(+)(out). It functions in the pathway one-carbon metabolism; methanogenesis from CO(2); methyl-coenzyme M from 5,10-methylene-5,6,7,8-tetrahydromethanopterin: step 2/2. Part of a complex that catalyzes the formation of methyl-coenzyme M and tetrahydromethanopterin from coenzyme M and methyl-tetrahydromethanopterin. This is an energy-conserving, sodium-ion translocating step. MtrH catalyzes the transfer of the methyl group from methyl-tetrahydromethanopterin to the corrinoid prosthetic group of MtrA. This chain is Tetrahydromethanopterin S-methyltransferase subunit H, found in Methanococcus aeolicus (strain ATCC BAA-1280 / DSM 17508 / OCM 812 / Nankai-3).